A 185-amino-acid chain; its full sequence is Protein GrpE (185 aa).

Over residues 1–20 (MSQEKKEELQSEAQVTKEET) the composition is skewed to basic and acidic residues. Positions 1–28 (MSQEKKEELQSEAQVTKEETPQANEAAA) are disordered.

This sequence belongs to the GrpE family. In terms of assembly, homodimer.

It is found in the cytoplasm. Participates actively in the response to hyperosmotic and heat shock by preventing the aggregation of stress-denatured proteins, in association with DnaK and GrpE. It is the nucleotide exchange factor for DnaK and may function as a thermosensor. Unfolded proteins bind initially to DnaJ; upon interaction with the DnaJ-bound protein, DnaK hydrolyzes its bound ATP, resulting in the formation of a stable complex. GrpE releases ADP from DnaK; ATP binding to DnaK triggers the release of the substrate protein, thus completing the reaction cycle. Several rounds of ATP-dependent interactions between DnaJ, DnaK and GrpE are required for fully efficient folding. The sequence is that of Protein GrpE from Sulfurimonas denitrificans (strain ATCC 33889 / DSM 1251) (Thiomicrospira denitrificans (strain ATCC 33889 / DSM 1251)).